The following is a 111-amino-acid chain: Integration host factor subunit alpha (111 aa).

The protein belongs to the bacterial histone-like protein family. In terms of assembly, heterodimer of an alpha and a beta chain.

Functionally, this protein is one of the two subunits of integration host factor, a specific DNA-binding protein that functions in genetic recombination as well as in transcriptional and translational control. The protein is Integration host factor subunit alpha of Chelativorans sp. (strain BNC1).